Consider the following 269-residue polypeptide: MKPLKILISNDDGVFAEGIRTLAGAAAFRGHQVTVVCPDQERSATGHGLTLHSPIRAEKANELFGKGVSAWGCNGTPADCVKLALNEILPEKPDLILSGINHGPNLGTDIFCSGTVAAALEGTLAGIPAIAISIASFQWRDFSFASQLALEIAEEALTKNWPQKLLLNINTPPCKSSEMGQLGWTRLSIRQYEEQFTRRIDPRGNPYYWMAGNAVKDIDSAGDGPSQWPSDVAQIESNSPSITPIEPDLFWRGNISDLPAINLKNYFSR.

The a divalent metal cation site is built by D11, D12, S43, and N101.

This sequence belongs to the SurE nucleotidase family. A divalent metal cation is required as a cofactor.

The protein localises to the cytoplasm. It carries out the reaction a ribonucleoside 5'-phosphate + H2O = a ribonucleoside + phosphate. Its function is as follows. Nucleotidase that shows phosphatase activity on nucleoside 5'-monophosphates. This Prochlorococcus marinus (strain MIT 9211) protein is 5'-nucleotidase SurE.